Reading from the N-terminus, the 262-residue chain is Indole-3-glycerol phosphate synthase (262 aa).

It belongs to the TrpC family.

The catalysed reaction is 1-(2-carboxyphenylamino)-1-deoxy-D-ribulose 5-phosphate + H(+) = (1S,2R)-1-C-(indol-3-yl)glycerol 3-phosphate + CO2 + H2O. It participates in amino-acid biosynthesis; L-tryptophan biosynthesis; L-tryptophan from chorismate: step 4/5. The protein is Indole-3-glycerol phosphate synthase of Leuconostoc mesenteroides subsp. mesenteroides (strain ATCC 8293 / DSM 20343 / BCRC 11652 / CCM 1803 / JCM 6124 / NCDO 523 / NBRC 100496 / NCIMB 8023 / NCTC 12954 / NRRL B-1118 / 37Y).